We begin with the raw amino-acid sequence, 419 residues long: E3 ubiquitin-protein ligase pellino homolog 2 (419 aa).

The region spanning 15–202 (EPVKYRELVV…HPQGGFTEES (188 aa)) is the FHA; atypical domain.

The protein belongs to the pellino family. In terms of assembly, interacts with TRAF6, IRAK4 and MAP3K7. Interacts with IRAK1. Interacts with BCL10; this interaction is impaired by SOCS3. In terms of processing, phosphorylated by IRAK1 and IRAK4 enhancing its E3 ligase activity. In terms of tissue distribution, widely expressed both in embryos and adult. Weakly or not expressed in spleen and thymus.

The catalysed reaction is S-ubiquitinyl-[E2 ubiquitin-conjugating enzyme]-L-cysteine + [acceptor protein]-L-lysine = [E2 ubiquitin-conjugating enzyme]-L-cysteine + N(6)-ubiquitinyl-[acceptor protein]-L-lysine.. Its pathway is protein modification; protein ubiquitination. Its function is as follows. E3 ubiquitin ligase catalyzing the covalent attachment of ubiquitin moieties onto substrate proteins. Involved in the TLR and IL-1 signaling pathways via interaction with the complex containing IRAK kinases and TRAF6. Mediates IL1B-induced IRAK1 'Lys-63'-linked polyubiquitination and possibly 'Lys-48'-linked ubiquitination. May be important for LPS- and IL1B-induced MAP3K7-dependent, but not MAP3K3-dependent, NF-kappa-B activation. Can activate the MAP (mitogen activated protein) kinase pathway leading to activation of ELK1. This Mus musculus (Mouse) protein is E3 ubiquitin-protein ligase pellino homolog 2 (Peli2).